The following is a 333-amino-acid chain: Testin-2 (333 aa).

Positions 1-17 (MIAVLFLAILCLEVDST) are cleaved as a signal peptide. Disulfide bonds link C135-C178, C169-C211, and C269-C322. An N-linked (GlcNAc...) asparagine glycan is attached at N173. Catalysis depends on residues H276 and N300.

It belongs to the peptidase C1 family. As to expression, sertoli cells.

Its subcellular location is the secreted. In Rattus norvegicus (Rat), this protein is Testin-2 (Testin).